The chain runs to 107 residues: Phosphoribosyl-ATP pyrophosphatase (107 aa).

Belongs to the PRA-PH family.

The protein resides in the cytoplasm. The enzyme catalyses 1-(5-phospho-beta-D-ribosyl)-ATP + H2O = 1-(5-phospho-beta-D-ribosyl)-5'-AMP + diphosphate + H(+). It participates in amino-acid biosynthesis; L-histidine biosynthesis; L-histidine from 5-phospho-alpha-D-ribose 1-diphosphate: step 2/9. The polypeptide is Phosphoribosyl-ATP pyrophosphatase (Bacillus cereus (strain AH187)).